We begin with the raw amino-acid sequence, 689 residues long: DNA ligase (689 aa).

Residues 40-44 (DSEYD), 89-90 (SL), and E121 each bind NAD(+). K123 acts as the N6-AMP-lysine intermediate in catalysis. Residues R144, E179, K295, and K319 each coordinate NAD(+). Residues C413, C416, C431, and C437 each coordinate Zn(2+). The 80-residue stretch at 610-689 (REQSGLTDKI…EEWLTLIKNV (80 aa)) folds into the BRCT domain.

Belongs to the NAD-dependent DNA ligase family. LigA subfamily. The cofactor is Mg(2+). Mn(2+) is required as a cofactor.

It carries out the reaction NAD(+) + (deoxyribonucleotide)n-3'-hydroxyl + 5'-phospho-(deoxyribonucleotide)m = (deoxyribonucleotide)n+m + AMP + beta-nicotinamide D-nucleotide.. DNA ligase that catalyzes the formation of phosphodiester linkages between 5'-phosphoryl and 3'-hydroxyl groups in double-stranded DNA using NAD as a coenzyme and as the energy source for the reaction. It is essential for DNA replication and repair of damaged DNA. In Rickettsia conorii (strain ATCC VR-613 / Malish 7), this protein is DNA ligase.